Here is a 215-residue protein sequence, read N- to C-terminus: Large ribosomal subunit protein uL1 (215 aa).

The protein belongs to the universal ribosomal protein uL1 family. In terms of assembly, part of the 50S ribosomal subunit.

Its function is as follows. Binds directly to 23S rRNA. Probably involved in E site tRNA release. Functionally, protein L1 is also a translational repressor protein, it controls the translation of its operon by binding to its mRNA. This Archaeoglobus fulgidus (strain ATCC 49558 / DSM 4304 / JCM 9628 / NBRC 100126 / VC-16) protein is Large ribosomal subunit protein uL1.